Here is a 667-residue protein sequence, read N- to C-terminus: Flavin-dependent halogenase malA (667 aa).

FAD contacts are provided by histidine 48, glutamate 70, isoleucine 79, and serine 82. Residue lysine 108 is part of the active site. Residues arginine 144, valine 168, aspartate 399, and isoleucine 412 each contribute to the FAD site. Glutamate 494 is a substrate binding site. Positions 597, 600, 613, and 616 each coordinate Zn(2+). The tract at residues 621-646 is flexible region; sequence TEPQTAVTFDPPLTAEEEALLYAAWN.

It belongs to the flavin-dependent halogenase family. Zn(2+) serves as cofactor.

The enzyme catalyses (+)-premalbrancheamide + 2 FAD + 2 chloride + 4 H(+) = (+)-malbrancheamide + 2 FADH2. It catalyses the reaction (+)-premalbrancheamide + FAD + chloride + 2 H(+) = (+)-malbrancheamide B + FADH2. The catalysed reaction is (+)-premalbrancheamide + FAD + chloride + 2 H(+) = (+)-isomalbrancheamide B + FADH2. It carries out the reaction (+)-malbrancheamide B + FAD + chloride + 2 H(+) = (+)-malbrancheamide + FADH2. The enzyme catalyses (+)-isomalbrancheamide B + FAD + chloride + 2 H(+) = (+)-malbrancheamide + FADH2. It catalyses the reaction (+)-premalbrancheamide + bromide + FAD + 2 H(+) = (+)-malbrancheamide C + FADH2. The catalysed reaction is (+)-premalbrancheamide + bromide + FAD + 2 H(+) = (+)-isomalbrancheamide C + FADH2. It carries out the reaction (+)-malbrancheamide B + bromide + FAD + 2 H(+) = (+)-malbrancheamide D + FADH2. The enzyme catalyses (+)-isomalbrancheamide B + bromide + FAD + 2 H(+) = (+)-isomalbrancheamide D + FADH2. Its pathway is alkaloid biosynthesis. Its function is as follows. Flavin-dependent halogenase; part of the gene cluster that mediates the biosynthesis of malbrancheamide, a dichlorinated fungal indole alkaloid that belongs to a family of natural products containing a characteristic bicyclo[2.2.2]diazaoctane core. The first step of malbrancheamide biosynthesis involves coupling of L-proline and L-tryptophan by malG, a bimodular NRPS, to produce L-Pro-L-Trp aldehyde through reductive offloading. This compound undergoes spontaneous cyclization and dehydration to give a dienamine which is reverse prenylated at C-2 by malE. The other prenyltransferase present in the cluster, malB, displays modest activity, suggesting that may be a redundant gene in the pathway. Subsequently, a [4+2] Diels-Alder cyclo-addition catalyzed by the bifunctional enzyme malC forms the characteristic bicyclo[2.2.2]diazaoctane ring of premalbrancheamid. Finally, the flavin-dependent halogenase malA catalyzes the iterative dichlorination of the indole ring of premalbrancheamide to yield C-9 monochlorinated malbrancheamide B, C-8 monochlorinated isomalbrancheamide B, and dichlorinated malbrancheamide. MalA is also able to brominate premalbrancheamide at C-9 to yield malbrancheamide C, and, to a lesser extend, at C-8 to yield isomalbrancheamide C. Finally, malA can brominate C-9 monochlorinated malbrancheamide B at C-8 to yield malbrancheamide D, or C-8 monochlorinated isomalbrancheamide B at C-9 to produce isomalbrancheamide D. The protein is Flavin-dependent halogenase malA of Malbranchea aurantiaca.